A 55-amino-acid polypeptide reads, in one-letter code: ATP synthase F(0) complex subunit 8 (55 aa).

Residues Ser7–Ile24 form a helical membrane-spanning segment.

Belongs to the ATPase protein 8 family. In terms of assembly, component of the ATP synthase complex composed at least of ATP5F1A/subunit alpha, ATP5F1B/subunit beta, ATP5MC1/subunit c (homooctomer), MT-ATP6/subunit a, MT-ATP8/subunit 8, ATP5ME/subunit e, ATP5MF/subunit f, ATP5MG/subunit g, ATP5MK/subunit k, ATP5MJ/subunit j, ATP5F1C/subunit gamma, ATP5F1D/subunit delta, ATP5F1E/subunit epsilon, ATP5PF/subunit F6, ATP5PB/subunit b, ATP5PD/subunit d, ATP5PO/subunit OSCP. ATP synthase complex consists of a soluble F(1) head domain (subunits alpha(3) and beta(3)) - the catalytic core - and a membrane F(0) domain - the membrane proton channel (subunits c, a, 8, e, f, g, k and j). These two domains are linked by a central stalk (subunits gamma, delta, and epsilon) rotating inside the F1 region and a stationary peripheral stalk (subunits F6, b, d, and OSCP).

It localises to the mitochondrion membrane. In terms of biological role, subunit 8, of the mitochondrial membrane ATP synthase complex (F(1)F(0) ATP synthase or Complex V) that produces ATP from ADP in the presence of a proton gradient across the membrane which is generated by electron transport complexes of the respiratory chain. ATP synthase complex consist of a soluble F(1) head domain - the catalytic core - and a membrane F(1) domain - the membrane proton channel. These two domains are linked by a central stalk rotating inside the F(1) region and a stationary peripheral stalk. During catalysis, ATP synthesis in the catalytic domain of F(1) is coupled via a rotary mechanism of the central stalk subunits to proton translocation. In vivo, can only synthesize ATP although its ATP hydrolase activity can be activated artificially in vitro. Part of the complex F(0) domain. The polypeptide is ATP synthase F(0) complex subunit 8 (Columbina passerina (Common ground-dove)).